The primary structure comprises 100 residues: U-myrmeciitoxin(01)-Mg7b (100 aa).

The N-terminal stretch at 1–17 (MKLSCLSLALAIILVLA) is a signal peptide. A propeptide spanning residues 18 to 50 (IVYSPHMEVKALADAEPDAIGFADAFGEADAEP) is cleaved from the precursor. O-linked (GalNAc...) serine glycosylation is present at Ser85. 2 O-linked (GalNAc...) threonine glycosylation sites follow: Thr94 and Thr95.

The protein belongs to the formicidae venom precursor-01 superfamily. Post-translationally, glycosylation is critical to maintaining the aqueous solubility of this protein, but does not directly contribute to its activity. As to expression, expressed by the venom gland.

The protein resides in the secreted. It localises to the target cell membrane. Neurotoxin that triggers pain behavior and inflammation in mammals, and is paralytic and lethal to insects. Causes a time-dependent increase in cell leak current. May act by targeting membranes. This is U-myrmeciitoxin(01)-Mg7b from Myrmecia gulosa (Red bulldog ant).